The following is a 47-amino-acid chain: Large ribosomal subunit protein bL33 (47 aa).

Belongs to the bacterial ribosomal protein bL33 family.

The polypeptide is Large ribosomal subunit protein bL33 (Staphylococcus capitis).